Reading from the N-terminus, the 381-residue chain is Deoxyguanosinetriphosphate triphosphohydrolase-like protein (381 aa).

Positions 76-203 (RMTHTLEVAG…ADLSDEIAYT (128 aa)) constitute an HD domain.

The protein belongs to the dGTPase family. Type 2 subfamily.

The sequence is that of Deoxyguanosinetriphosphate triphosphohydrolase-like protein from Leptospira interrogans serogroup Icterohaemorrhagiae serovar copenhageni (strain Fiocruz L1-130).